A 395-amino-acid chain; its full sequence is Phosphoprotein (395 aa).

2 disordered regions span residues 31 to 109 and 126 to 214; these read VETV…DTQL and NKSS…PASV. Positions 65–74 are enriched in basic and acidic residues; it reads TPDRQNRSDK. Composition is skewed to polar residues over residues 75-98, 146-168, and 203-212; these read QPSTPEQMTPQNSPPATSTDQPPT, LPTQQQGSQPSRGNSQERPQNRA, and SGQSQDNTPA. The interval 222–285 is multimerization; it reads DFVQAMMSMM…LGMMKILDPG (64 aa).

It belongs to the rubulavirus/avulavirus P protein family. As to quaternary structure, homotetramer. Interacts (via multimerization domain) with polymerase L; this interaction forms the polymerase L-P complex. Interacts (via N-terminus) with N0 (via Ncore); this interaction allows P to chaperon N0 to avoid N polymerization before encapsidation. Interacts (via C-terminus) with N-RNA template; this interaction positions the polymerase on the template for both transcription and replication.

Essential cofactor of the RNA polymerase L that plays a central role in the transcription and replication by forming the polymerase complex with RNA polymerase L and recruiting L to the genomic N-RNA template for RNA synthesis. Also plays a central role in the encapsidation of nascent RNA chains by forming the encapsidation complex with the nucleocapsid protein N (N-P complex). Acts as a chaperone for newly synthesized free N protein, so-called N0, allowing encapsidation of nascent RNA chains during replication. The nucleoprotein protein N prevents excessive phosphorylation of P, which leads to down-regulation of viral transcription/ replication. Participates, together with N, in the formation of viral factories (viroplasms), which are large inclusions in the host cytoplasm where replication takes place. The sequence is that of Phosphoprotein (P/C) from Gallus gallus (Chicken).